The sequence spans 91 residues: UPF0298 protein M28_Spy0318 (91 aa).

The protein belongs to the UPF0298 family.

Its subcellular location is the cytoplasm. The sequence is that of UPF0298 protein M28_Spy0318 from Streptococcus pyogenes serotype M28 (strain MGAS6180).